A 383-amino-acid polypeptide reads, in one-letter code: Putative glutamate--cysteine ligase 2-2 (383 aa).

The protein belongs to the glutamate--cysteine ligase type 2 family. YbdK subfamily.

The enzyme catalyses L-cysteine + L-glutamate + ATP = gamma-L-glutamyl-L-cysteine + ADP + phosphate + H(+). ATP-dependent carboxylate-amine ligase which exhibits weak glutamate--cysteine ligase activity. This chain is Putative glutamate--cysteine ligase 2-2, found in Legionella pneumophila (strain Lens).